The following is a 478-amino-acid chain: UDP-N-acetylmuramate--L-alanine ligase (478 aa).

126–132 (GTHGKTT) contributes to the ATP binding site.

It belongs to the MurCDEF family.

It localises to the cytoplasm. It carries out the reaction UDP-N-acetyl-alpha-D-muramate + L-alanine + ATP = UDP-N-acetyl-alpha-D-muramoyl-L-alanine + ADP + phosphate + H(+). Its pathway is cell wall biogenesis; peptidoglycan biosynthesis. In terms of biological role, cell wall formation. The protein is UDP-N-acetylmuramate--L-alanine ligase of Mycolicibacterium vanbaalenii (strain DSM 7251 / JCM 13017 / BCRC 16820 / KCTC 9966 / NRRL B-24157 / PYR-1) (Mycobacterium vanbaalenii).